A 185-amino-acid chain; its full sequence is Ribosome-recycling factor (185 aa).

It belongs to the RRF family.

Its subcellular location is the cytoplasm. In terms of biological role, responsible for the release of ribosomes from messenger RNA at the termination of protein biosynthesis. May increase the efficiency of translation by recycling ribosomes from one round of translation to another. The chain is Ribosome-recycling factor from Aliivibrio fischeri (strain ATCC 700601 / ES114) (Vibrio fischeri).